We begin with the raw amino-acid sequence, 838 residues long: Polyribonucleotide nucleotidyltransferase (838 aa).

Residues Asp494 and Asp500 each coordinate Mg(2+). Positions 561 to 620 (PRMESMLIDKGKIKNVIGAGGKNVREICEKTGAKIEISQDGTVMIYAVGREAIESAKDMI) constitute a KH domain. One can recognise an S1 motif domain in the interval 630–697 (GKIYSGEVCE…DKDHIQLSMR (68 aa)). A compositionally biased stretch (gly residues) spans 747-757 (GGASAGRNGRG). A disordered region spans residues 747–838 (GGASAGRNGR…PAAPKKPRFF (92 aa)). Residues 788 to 810 (AGSSGYSSDSSSGNTKSSSSESS) show a composition bias toward low complexity. Over residues 811–820 (GGTGGRGRNG) the composition is skewed to gly residues.

Belongs to the polyribonucleotide nucleotidyltransferase family. It depends on Mg(2+) as a cofactor.

It localises to the cytoplasm. It catalyses the reaction RNA(n+1) + phosphate = RNA(n) + a ribonucleoside 5'-diphosphate. Functionally, involved in mRNA degradation. Catalyzes the phosphorolysis of single-stranded polyribonucleotides processively in the 3'- to 5'-direction. In Anaplasma phagocytophilum (strain HZ), this protein is Polyribonucleotide nucleotidyltransferase.